A 236-amino-acid chain; its full sequence is Phosphoribosylaminoimidazole-succinocarboxamide synthase (236 aa).

The protein belongs to the SAICAR synthetase family.

It catalyses the reaction 5-amino-1-(5-phospho-D-ribosyl)imidazole-4-carboxylate + L-aspartate + ATP = (2S)-2-[5-amino-1-(5-phospho-beta-D-ribosyl)imidazole-4-carboxamido]succinate + ADP + phosphate + 2 H(+). It functions in the pathway purine metabolism; IMP biosynthesis via de novo pathway; 5-amino-1-(5-phospho-D-ribosyl)imidazole-4-carboxamide from 5-amino-1-(5-phospho-D-ribosyl)imidazole-4-carboxylate: step 1/2. The chain is Phosphoribosylaminoimidazole-succinocarboxamide synthase from Pseudomonas syringae pv. syringae (strain B728a).